Here is a 211-residue protein sequence, read N- to C-terminus: Cytidylate kinase (211 aa).

Gly9–Thr17 serves as a coordination point for ATP.

The protein belongs to the cytidylate kinase family. Type 1 subfamily.

It is found in the cytoplasm. The catalysed reaction is CMP + ATP = CDP + ADP. It carries out the reaction dCMP + ATP = dCDP + ADP. The sequence is that of Cytidylate kinase from Paramagnetospirillum magneticum (strain ATCC 700264 / AMB-1) (Magnetospirillum magneticum).